Consider the following 499-residue polypeptide: Importin subunit alpha-8 (499 aa).

An IBB domain is found at 1-57; sequence MATSKAPKERLKNYKYRGKEMSLPRQQRIASSLQLRKTRKDEQVLKRRNIDLFSSDM. ARM repeat units lie at residues 101–141, 144–183, 186–226, 229–268, 271–310, 313–352, 354–393, and 397–436; these read TPPL…NIAS, SEQTRAVVKEGAIQPLIELLCSPHLTVSEQAVWALGNIAG, AEFR…NLCR, DPYPSESAVRQMLPPLCQLLLHRDNEILADTCWALSYLTK, KEYIHHVVTTGILPRLVELMTSSELSISIPCLHTIGNIVA, DEQTQMAIDAGMLKVLGQVLKHPKTSIQVLAAWTMSNVAA, PRHQVEQLLCNLLPILVDLLRNAELKVQKEVVCTVINIAT, and QDQLTLLAHSGILEPMLSLLSAPDLEVVIIVLDIISYLLQ.

It belongs to the importin alpha family. In terms of assembly, binds to importin subunit beta-1/KPNB1 via the IBB domain; this complex dissociates in the presence of RAN-GTP. Shows a limited binding to the RB1 nuclear localization signal (NLS), but not to the SV40, nor NPM1 NLSs. Interacts with RSL1D1. In terms of tissue distribution, expressed predominantly in ovary. Isoform 1 is the predominant form.

The protein resides in the nucleus. In terms of biological role, functions in nuclear protein import. The sequence is that of Importin subunit alpha-8 (Kpna7) from Mus musculus (Mouse).